A 129-amino-acid polypeptide reads, in one-letter code: Phosphoribosyl-AMP cyclohydrolase (129 aa).

Mg(2+) is bound at residue D84. Residue C85 coordinates Zn(2+). Mg(2+)-binding residues include D86 and D88. Positions 101 and 108 each coordinate Zn(2+).

It belongs to the PRA-CH family. In terms of assembly, homodimer. The cofactor is Mg(2+). Requires Zn(2+) as cofactor.

It is found in the cytoplasm. It catalyses the reaction 1-(5-phospho-beta-D-ribosyl)-5'-AMP + H2O = 1-(5-phospho-beta-D-ribosyl)-5-[(5-phospho-beta-D-ribosylamino)methylideneamino]imidazole-4-carboxamide. The protein operates within amino-acid biosynthesis; L-histidine biosynthesis; L-histidine from 5-phospho-alpha-D-ribose 1-diphosphate: step 3/9. Its function is as follows. Catalyzes the hydrolysis of the adenine ring of phosphoribosyl-AMP. In Halobacterium salinarum (strain ATCC 700922 / JCM 11081 / NRC-1) (Halobacterium halobium), this protein is Phosphoribosyl-AMP cyclohydrolase.